The chain runs to 392 residues: Formate-dependent phosphoribosylglycinamide formyltransferase (392 aa).

Residues 22 to 23 (EL) and E82 contribute to the N(1)-(5-phospho-beta-D-ribosyl)glycinamide site. ATP is bound by residues R114, K155, 160 to 165 (SSGKGQ), 195 to 198 (EGVV), and E203. In terms of domain architecture, ATP-grasp spans 119–308 (RLAAEELQLP…EFALHVRAFL (190 aa)). 2 residues coordinate Mg(2+): E267 and E279. N(1)-(5-phospho-beta-D-ribosyl)glycinamide is bound by residues D286, K355, and 362-363 (RR).

It belongs to the PurK/PurT family. As to quaternary structure, homodimer.

It carries out the reaction N(1)-(5-phospho-beta-D-ribosyl)glycinamide + formate + ATP = N(2)-formyl-N(1)-(5-phospho-beta-D-ribosyl)glycinamide + ADP + phosphate + H(+). Its pathway is purine metabolism; IMP biosynthesis via de novo pathway; N(2)-formyl-N(1)-(5-phospho-D-ribosyl)glycinamide from N(1)-(5-phospho-D-ribosyl)glycinamide (formate route): step 1/1. Involved in the de novo purine biosynthesis. Catalyzes the transfer of formate to 5-phospho-ribosyl-glycinamide (GAR), producing 5-phospho-ribosyl-N-formylglycinamide (FGAR). Formate is provided by PurU via hydrolysis of 10-formyl-tetrahydrofolate. The chain is Formate-dependent phosphoribosylglycinamide formyltransferase from Shigella flexneri.